A 322-amino-acid polypeptide reads, in one-letter code: Endochitinase (322 aa).

The N-terminal stretch at 1–21 (MKMRYCVLVSVLAILVIRGSA) is a signal peptide. Residues 22 to 62 (ENCGRQAGGALCPGGQCCSKWGWCGTTPDHCGTDCQSQCGG) enclose the Chitin-binding type-1 domain. Intrachain disulfides connect C24–C39, C33–C45, C38–C52, and C56–C60.

The protein belongs to the glycosyl hydrolase 19 family. Chitinase class I subfamily.

It catalyses the reaction Random endo-hydrolysis of N-acetyl-beta-D-glucosaminide (1-&gt;4)-beta-linkages in chitin and chitodextrins.. Its function is as follows. Defense against chitin-containing fungal pathogens. The chain is Endochitinase from Actinidia chinensis var. chinensis (Chinese soft-hair kiwi).